Consider the following 224-residue polypeptide: Transmembrane emp24 domain-containing protein 7 (224 aa).

Positions 1–34 (MPRPGSAQRWAAVAGRWGCRLLALLLLVPGPGGA) are cleaved as a signal peptide. The Lumenal segment spans residues 35–187 (SEITFELPDN…RAEDLNTRVA (153 aa)). Residues 46–128 (KQCFYEDIAQ…HKTVYFDFQV (83 aa)) enclose the GOLD domain. A glycan (N-linked (GlcNAc...) asparagine) is linked at N103. A helical membrane pass occupies residues 188–208 (YWSVGEALILLVVSIGQVFLL). At 209 to 224 (KSFFSDKRTTTTRVGS) the chain is on the cytoplasmic side. The COPII vesicle coat-binding signature appears at 211-212 (FF). The short motif at 211–224 (FFSDKRTTTTRVGS) is the COPI vesicle coat-binding element.

The protein belongs to the EMP24/GP25L family. In terms of assembly, predominantly monomeric and to lesser extent homodimeric in endoplasmic reticulum, endoplasmic reticulum-Golgi intermediate compartment and cis-Golgi network. Oligomerizes with other members of the EMP24/GP25L family such as TMED2, TMED9 and TMED10. Interacts (via C-terminus) with COPG1; the interaction involves dimeric TMED7. Post-translationally, N-linked glycosylated in complex form containing terminal sialic acid.

The protein localises to the endoplasmic reticulum membrane. Its subcellular location is the golgi apparatus. It localises to the cis-Golgi network membrane. It is found in the endoplasmic reticulum-Golgi intermediate compartment membrane. The protein resides in the cytoplasmic vesicle. The protein localises to the COPI-coated vesicle membrane. Its subcellular location is the COPII-coated vesicle membrane. Its function is as follows. Potential role in vesicular protein trafficking, mainly in the early secretory pathway. Appears to play a role in the biosynthesis of secreted cargo including processing and post-translational modifications. The protein is Transmembrane emp24 domain-containing protein 7 (TMED7) of Homo sapiens (Human).